A 216-amino-acid chain; its full sequence is Probable GTP-binding protein EngB (216 aa).

The 178-residue stretch at 37–214 (AGLEVAFAGR…RAAMIKLIAE (178 aa)) folds into the EngB-type G domain. GTP contacts are provided by residues 45-52 (GRSNVGKS), 72-76 (GRTQE), 92-95 (DMPG), 159-162 (TKAD), and 193-195 (TSS). Residues Ser-52 and Thr-74 each contribute to the Mg(2+) site.

The protein belongs to the TRAFAC class TrmE-Era-EngA-EngB-Septin-like GTPase superfamily. EngB GTPase family. The cofactor is Mg(2+).

Necessary for normal cell division and for the maintenance of normal septation. This is Probable GTP-binding protein EngB from Rhodopseudomonas palustris (strain BisB18).